The chain runs to 230 residues: Sugar fermentation stimulation protein homolog (230 aa).

Belongs to the SfsA family.

This chain is Sugar fermentation stimulation protein homolog, found in Clostridium tetani (strain Massachusetts / E88).